Consider the following 467-residue polypeptide: UPF0236 protein TTE0610/TTE0881/TTE1053/TTE2432 (467 aa).

The protein belongs to the UPF0236 family.

This is UPF0236 protein TTE0610/TTE0881/TTE1053/TTE2432 from Caldanaerobacter subterraneus subsp. tengcongensis (strain DSM 15242 / JCM 11007 / NBRC 100824 / MB4) (Thermoanaerobacter tengcongensis).